The following is a 340-amino-acid chain: DNA-directed RNA polymerase subunit alpha (340 aa).

The interval 1–226 (MLIAQRPSLT…ELFGLARELN (226 aa)) is alpha N-terminal domain (alpha-NTD). The tract at residues 243-340 (LAADLALPIE…DAGFVETEQY (98 aa)) is alpha C-terminal domain (alpha-CTD).

Belongs to the RNA polymerase alpha chain family. As to quaternary structure, homodimer. The RNAP catalytic core consists of 2 alpha, 1 beta, 1 beta' and 1 omega subunit. When a sigma factor is associated with the core the holoenzyme is formed, which can initiate transcription. Post-translationally, the last 19 amino acids in the C-terminal part are cleaved in the spore.

The enzyme catalyses RNA(n) + a ribonucleoside 5'-triphosphate = RNA(n+1) + diphosphate. In terms of biological role, DNA-dependent RNA polymerase catalyzes the transcription of DNA into RNA using the four ribonucleoside triphosphates as substrates. This chain is DNA-directed RNA polymerase subunit alpha, found in Streptomyces granaticolor.